Here is a 228-residue protein sequence, read N- to C-terminus: UPF0502 protein Rfer_1648 (228 aa).

This sequence belongs to the UPF0502 family.

The chain is UPF0502 protein Rfer_1648 from Albidiferax ferrireducens (strain ATCC BAA-621 / DSM 15236 / T118) (Rhodoferax ferrireducens).